The chain runs to 452 residues: Biotin carboxylase (452 aa).

Positions 1–445 constitute a Biotin carboxylation domain; that stretch reads MFKKVLIANR…TTAFVTNHLK (445 aa). ATP is bound by residues K116, K158, 164 to 165, 200 to 203, H208, and H235; these read GG and EKAV. The region spanning 120-317 is the ATP-grasp domain; sequence RTAMQTAGVP…LVEWQLLIAA (198 aa). K237 is a binding site for hydrogencarbonate. The ATP site is built by E275 and E288. Mg(2+) is bound by residues E275, E288, and N290. Positions 275, 288, and 290 each coordinate Mn(2+). Hydrogencarbonate contacts are provided by R292, V295, and R338. R292 is a catalytic residue. R338 is a binding site for biotin.

Acetyl-CoA carboxylase is a heterohexamer of biotin carboxyl carrier protein, biotin carboxylase and the two subunits of carboxyl transferase in a 2:2 complex. Requires Mg(2+) as cofactor. Mn(2+) is required as a cofactor.

The catalysed reaction is N(6)-biotinyl-L-lysyl-[protein] + hydrogencarbonate + ATP = N(6)-carboxybiotinyl-L-lysyl-[protein] + ADP + phosphate + H(+). The protein operates within lipid metabolism; malonyl-CoA biosynthesis; malonyl-CoA from acetyl-CoA: step 1/1. In terms of biological role, this protein is a component of the acetyl coenzyme A carboxylase complex; first, biotin carboxylase catalyzes the carboxylation of the carrier protein and then the transcarboxylase transfers the carboxyl group to form malonyl-CoA. This Halalkalibacterium halodurans (strain ATCC BAA-125 / DSM 18197 / FERM 7344 / JCM 9153 / C-125) (Bacillus halodurans) protein is Biotin carboxylase (accC).